A 101-amino-acid polypeptide reads, in one-letter code: DNA-directed RNA polymerase subunit beta (101 aa).

The segment at 74-101 (KRRLSALGPGGLSRERAGLEVRDVHSSH) is disordered. A compositionally biased stretch (basic and acidic residues) spans 86–101 (SRERAGLEVRDVHSSH).

The protein belongs to the RNA polymerase beta chain family. The RNAP catalytic core consists of 2 alpha, 1 beta, 1 beta' and 1 omega subunit. When a sigma factor is associated with the core the holoenzyme is formed, which can initiate transcription.

It catalyses the reaction RNA(n) + a ribonucleoside 5'-triphosphate = RNA(n+1) + diphosphate. DNA-dependent RNA polymerase catalyzes the transcription of DNA into RNA using the four ribonucleoside triphosphates as substrates. This chain is DNA-directed RNA polymerase subunit beta (rpoB), found in Mycolicibacterium peregrinum (Mycobacterium peregrinum).